The primary structure comprises 113 residues: Hydrogenase maturation factor HypA (113 aa).

Histidine 2 serves as a coordination point for Ni(2+). The Zn(2+) site is built by cysteine 73, cysteine 75, cysteine 89, and cysteine 92.

Belongs to the HypA/HybF family.

In terms of biological role, involved in the maturation of [NiFe] hydrogenases. Required for nickel insertion into the metal center of the hydrogenase. The protein is Hydrogenase maturation factor HypA of Methanocella arvoryzae (strain DSM 22066 / NBRC 105507 / MRE50).